Here is a 375-residue protein sequence, read N- to C-terminus: Transaldolase (375 aa).

The active-site Schiff-base intermediate with substrate is the Lys145.

The protein belongs to the transaldolase family. Type 2 subfamily.

Its subcellular location is the cytoplasm. It carries out the reaction D-sedoheptulose 7-phosphate + D-glyceraldehyde 3-phosphate = D-erythrose 4-phosphate + beta-D-fructose 6-phosphate. It participates in carbohydrate degradation; pentose phosphate pathway; D-glyceraldehyde 3-phosphate and beta-D-fructose 6-phosphate from D-ribose 5-phosphate and D-xylulose 5-phosphate (non-oxidative stage): step 2/3. Its function is as follows. Transaldolase is important for the balance of metabolites in the pentose-phosphate pathway. In Mycobacterium leprae (strain Br4923), this protein is Transaldolase.